Consider the following 371-residue polypeptide: O-antigen chain mannosyltransferase C (371 aa).

This sequence belongs to the glycosyltransferase group 1 family. Glycosyltransferase 4 subfamily.

The catalysed reaction is N-acetyl-alpha-D-glucosaminyl-di-trans,octa-cis-undecaprenyl diphosphate + GDP-alpha-D-mannose = alpha-D-mannosyl-(1-&gt;3)-N-acetyl-alpha-D-glucosaminyl-di-trans,octa-cis-undecaprenyl diphosphate + GDP + H(+). It functions in the pathway bacterial outer membrane biogenesis; LPS O-antigen biosynthesis. Mannosyltransferase involved in the biosynthesis of the repeat unit of the lipopolysaccharide (LPS) O-antigen region. Catalyzes the transfer of a single alpha-(1-&gt;3)-linked mannose residue to the acceptor N-acetyl-glucosaminyl-diphospho-undecaprenol during the synthesis of the adapter region. In Escherichia coli, this protein is O-antigen chain mannosyltransferase C.